Reading from the N-terminus, the 93-residue chain is Exodeoxyribonuclease 7 small subunit (93 aa).

Residues 1–22 form a disordered region; that stretch reads MAKTASPGATPPGNGAEPLPDN.

The protein belongs to the XseB family. As to quaternary structure, heterooligomer composed of large and small subunits.

Its subcellular location is the cytoplasm. It carries out the reaction Exonucleolytic cleavage in either 5'- to 3'- or 3'- to 5'-direction to yield nucleoside 5'-phosphates.. Its function is as follows. Bidirectionally degrades single-stranded DNA into large acid-insoluble oligonucleotides, which are then degraded further into small acid-soluble oligonucleotides. This is Exodeoxyribonuclease 7 small subunit from Burkholderia multivorans (strain ATCC 17616 / 249).